The chain runs to 176 residues: ATP synthase subunit delta (176 aa).

It belongs to the ATPase delta chain family. As to quaternary structure, F-type ATPases have 2 components, F(1) - the catalytic core - and F(0) - the membrane proton channel. F(1) has five subunits: alpha(3), beta(3), gamma(1), delta(1), epsilon(1). F(0) has three main subunits: a(1), b(2) and c(10-14). The alpha and beta chains form an alternating ring which encloses part of the gamma chain. F(1) is attached to F(0) by a central stalk formed by the gamma and epsilon chains, while a peripheral stalk is formed by the delta and b chains.

Its subcellular location is the cell membrane. F(1)F(0) ATP synthase produces ATP from ADP in the presence of a proton or sodium gradient. F-type ATPases consist of two structural domains, F(1) containing the extramembraneous catalytic core and F(0) containing the membrane proton channel, linked together by a central stalk and a peripheral stalk. During catalysis, ATP synthesis in the catalytic domain of F(1) is coupled via a rotary mechanism of the central stalk subunits to proton translocation. In terms of biological role, this protein is part of the stalk that links CF(0) to CF(1). It either transmits conformational changes from CF(0) to CF(1) or is implicated in proton conduction. The chain is ATP synthase subunit delta from Wigglesworthia glossinidia brevipalpis.